Reading from the N-terminus, the 370-residue chain is UDP-N-acetylglucosamine--N-acetylmuramyl-(pentapeptide) pyrophosphoryl-undecaprenol N-acetylglucosamine transferase (370 aa).

UDP-N-acetyl-alpha-D-glucosamine-binding positions include 15 to 17, Asn126, Arg169, Ser197, and Gln299; that span reads TGG.

This sequence belongs to the glycosyltransferase 28 family. MurG subfamily.

The protein localises to the cell inner membrane. The enzyme catalyses di-trans,octa-cis-undecaprenyl diphospho-N-acetyl-alpha-D-muramoyl-L-alanyl-D-glutamyl-meso-2,6-diaminopimeloyl-D-alanyl-D-alanine + UDP-N-acetyl-alpha-D-glucosamine = di-trans,octa-cis-undecaprenyl diphospho-[N-acetyl-alpha-D-glucosaminyl-(1-&gt;4)]-N-acetyl-alpha-D-muramoyl-L-alanyl-D-glutamyl-meso-2,6-diaminopimeloyl-D-alanyl-D-alanine + UDP + H(+). The protein operates within cell wall biogenesis; peptidoglycan biosynthesis. Its function is as follows. Cell wall formation. Catalyzes the transfer of a GlcNAc subunit on undecaprenyl-pyrophosphoryl-MurNAc-pentapeptide (lipid intermediate I) to form undecaprenyl-pyrophosphoryl-MurNAc-(pentapeptide)GlcNAc (lipid intermediate II). This is UDP-N-acetylglucosamine--N-acetylmuramyl-(pentapeptide) pyrophosphoryl-undecaprenol N-acetylglucosamine transferase from Methylorubrum populi (strain ATCC BAA-705 / NCIMB 13946 / BJ001) (Methylobacterium populi).